The primary structure comprises 777 residues: B3 domain-containing protein REM-like 1 (777 aa).

The TF-B3 1 DNA-binding region spans 97–193 (FVTFTLAPVD…TPVLSLCFEE (97 aa)). Disordered stretches follow at residues 200–248 (VGEE…TSPS) and 344–391 (KSSS…ESSS). The span at 218 to 243 (KIVKDDNNKDESSTWKREGNHLRCKD) shows a compositional bias: basic and acidic residues. Positions 252–347 (TLTVTITPDS…TPVLSIKSSS (96 aa)) form a DNA-binding region, TF-B3 2. Over residues 344-368 (KSSSGKGQSEFSKESLSIKPSSGNM) the composition is skewed to polar residues. The segment covering 370-388 (KKVENNREASRKYPPRSRE) has biased composition (basic and acidic residues). DNA-binding regions (TF-B3) lie at residues 582 to 676 (FLTL…RDSS) and 683 to 777 (FLTL…FYTK).

It is found in the nucleus. This is B3 domain-containing protein REM-like 1 from Arabidopsis thaliana (Mouse-ear cress).